A 305-amino-acid chain; its full sequence is Ribosomal protein L11 methyltransferase (305 aa).

Thr149, Gly176, Asp198, and Asn240 together coordinate S-adenosyl-L-methionine.

It belongs to the methyltransferase superfamily. PrmA family.

Its subcellular location is the cytoplasm. The catalysed reaction is L-lysyl-[protein] + 3 S-adenosyl-L-methionine = N(6),N(6),N(6)-trimethyl-L-lysyl-[protein] + 3 S-adenosyl-L-homocysteine + 3 H(+). Functionally, methylates ribosomal protein L11. The protein is Ribosomal protein L11 methyltransferase of Trichlorobacter lovleyi (strain ATCC BAA-1151 / DSM 17278 / SZ) (Geobacter lovleyi).